A 181-amino-acid chain; its full sequence is Major urinary protein 20 (181 aa).

Residues Met-1–Ala-19 form the signal peptide. A disulfide bridge connects residues Cys-83 and Cys-176.

This sequence belongs to the calycin superfamily. Lipocalin family. In terms of tissue distribution, detected in urine of males but absent from female urine (at protein level).

The protein localises to the secreted. Male pheromone which stimulates female sexual attraction to male urinary scent and promotes a strong learned attraction to the airborne urinary odor of an individual male. Promotes spatial learning by rapidly conditioning preference for its remembered location among females and competitor males so that animals prefer to spend time in the site even when scent is absent. In addition to promoting a rapid attraction response, also elicits ultrasonic vocalizations and urinary scent marking in females which do not occur immediately after exposure. Stimulates hippocampal neurogenesis and cell proliferation in the subventricular zone in females. Promotes male aggressive behavior. Response to Mup20 is mediated by a neural circuit extending from the accessory olfactory bulb to a subset of nitric oxidase synthase-expressing neurons in the medial amygdala. As well as acting as a pheromone itself, binds most of the male pheromone, 2-sec-butyl-4,5-dihydrothiazole, in urine and is responsible for its slow release from scent marks. The polypeptide is Major urinary protein 20 (Mus musculus (Mouse)).